The following is a 289-amino-acid chain: Shikimate kinase (289 aa).

Pro-84–Ala-94 contacts ATP.

This sequence belongs to the GHMP kinase family. Archaeal shikimate kinase subfamily.

Its subcellular location is the cytoplasm. The enzyme catalyses shikimate + ATP = 3-phosphoshikimate + ADP + H(+). Its pathway is metabolic intermediate biosynthesis; chorismate biosynthesis; chorismate from D-erythrose 4-phosphate and phosphoenolpyruvate: step 5/7. This chain is Shikimate kinase, found in Methanobrevibacter smithii (strain ATCC 35061 / DSM 861 / OCM 144 / PS).